Consider the following 511-residue polypeptide: Histidine ammonia-lyase (511 aa).

The segment at residues 142–144 (ASG) is a cross-link (5-imidazolinone (Ala-Gly)). Serine 143 is modified (2,3-didehydroalanine (Ser)).

This sequence belongs to the PAL/histidase family. Contains an active site 4-methylidene-imidazol-5-one (MIO), which is formed autocatalytically by cyclization and dehydration of residues Ala-Ser-Gly.

Its subcellular location is the cytoplasm. It catalyses the reaction L-histidine = trans-urocanate + NH4(+). It functions in the pathway amino-acid degradation; L-histidine degradation into L-glutamate; N-formimidoyl-L-glutamate from L-histidine: step 1/3. The polypeptide is Histidine ammonia-lyase (Brucella canis (strain ATCC 23365 / NCTC 10854 / RM-666)).